A 955-amino-acid polypeptide reads, in one-letter code: 2-oxoglutarate dehydrogenase E1 component (955 aa).

Belongs to the alpha-ketoglutarate dehydrogenase family. In terms of assembly, homodimer. Part of the 2-oxoglutarate dehydrogenase (OGDH) complex composed of E1 (2-oxoglutarate dehydrogenase), E2 (dihydrolipoamide succinyltransferase) and E3 (dihydrolipoamide dehydrogenase); the complex contains multiple copies of the three enzymatic components (E1, E2 and E3). The cofactor is thiamine diphosphate.

It carries out the reaction N(6)-[(R)-lipoyl]-L-lysyl-[protein] + 2-oxoglutarate + H(+) = N(6)-[(R)-S(8)-succinyldihydrolipoyl]-L-lysyl-[protein] + CO2. Functionally, E1 component of the 2-oxoglutarate dehydrogenase (OGDH) complex which catalyzes the decarboxylation of 2-oxoglutarate, the first step in the conversion of 2-oxoglutarate to succinyl-CoA and CO(2). The chain is 2-oxoglutarate dehydrogenase E1 component from Bacillus cereus (strain B4264).